The following is a 192-amino-acid chain: GTP-dependent dephospho-CoA kinase (192 aa).

The GTP site is built by D49, V50, V51, D68, K70, and E127.

Belongs to the GTP-dependent DPCK family.

It carries out the reaction 3'-dephospho-CoA + GTP = GDP + CoA + H(+). It functions in the pathway cofactor biosynthesis; coenzyme A biosynthesis. Catalyzes the GTP-dependent phosphorylation of the 3'-hydroxyl group of dephosphocoenzyme A to form coenzyme A (CoA). This is GTP-dependent dephospho-CoA kinase from Halorubrum lacusprofundi (strain ATCC 49239 / DSM 5036 / JCM 8891 / ACAM 34).